The primary structure comprises 392 residues: ESX-1 secretion-associated protein EspA (392 aa).

Residues 302–392 (TRQALRPRAD…GQKVLVRNVV (91 aa)) are disordered. A compositionally biased stretch (gly residues) spans 334 to 344 (QGMGGPVGMGG).

Homodimer; disulfide-linked. An artificial EsxB-EsxA heterodimer interacts with EspA.

It localises to the secreted. Required for secretion of EsxA (ESAT-6) and EsxB (CFP-10) and for virulence. Involved in translocation of bacteria from the host (human) phagolysosome to the host cytoplasm. The polypeptide is ESX-1 secretion-associated protein EspA (Mycobacterium tuberculosis (strain ATCC 25618 / H37Rv)).